The sequence spans 63 residues: Arabinogalactan peptide 3 (63 aa).

An N-terminal signal peptide occupies residues 1–26; sequence MASRILYAAAVVAAVAVSSLAGVAYA. Residue S36 is the site of GPI-anchor amidated serine attachment. A propeptide spans 37-63 (removed in mature form); that stretch reads GAAAVSSSLVAAVLCPAVALLLGNLRQ.

Belongs to the AG-peptide AGP family. O-glycosylated on hydroxyprolines; noncontiguous hydroxylproline residues are glycosylated with arabinogalactan. Expressed in roots, stems, leaves, flowers and seeds.

It is found in the vacuole. Its subcellular location is the aleurone grain membrane. Proteoglycan that seems to be implicated in diverse developmental roles such as differentiation, cell-cell recognition, embryogenesis and programmed cell death. The polypeptide is Arabinogalactan peptide 3 (AGPEP3) (Oryza sativa subsp. japonica (Rice)).